The following is a 314-amino-acid chain: Homeobox protein DBX1-A (314 aa).

The homeobox DNA-binding region spans 175–234 (GMLRRAVFSDVQRKALEKMFQKQKYISKPDRKKLAAKLGLKDSQVKIWFQNRRMKWRNSK). Disordered regions lie at residues 234 to 279 (KERE…CAPS) and 292 to 314 (STDS…ITVS). Residues 258-267 (DLSDVGKKSS) show a composition bias toward basic and acidic residues. Over residues 305 to 314 (SESEDEITVS) the composition is skewed to acidic residues.

This sequence belongs to the H2.0 homeobox family.

The protein localises to the nucleus. The polypeptide is Homeobox protein DBX1-A (dbx1a) (Danio rerio (Zebrafish)).